Here is a 466-residue protein sequence, read N- to C-terminus: NADPH:adrenodoxin oxidoreductase, mitochondrial (466 aa).

Residues alanine 40, glutamate 61, leucine 69, and leucine 105 each contribute to the FAD site. NADP(+)-binding positions include 176 to 179 (QGNV), 220 to 221 (RR), and glutamate 232. FAD-binding positions include tryptophan 379 and 386–388 (GVI). An NADP(+)-binding site is contributed by glycine 386.

It belongs to the ferredoxin--NADP reductase type 1 family. FAD serves as cofactor. As to expression, expressed predominantly in prothoracic gland of the larval ring gland and nurse cells of the adult ovary. Low expression is all adult tissues examined.

It is found in the mitochondrion inner membrane. It catalyses the reaction 2 reduced [adrenodoxin] + NADP(+) + H(+) = 2 oxidized [adrenodoxin] + NADPH. It participates in steroid metabolism; cholesterol metabolism. In terms of biological role, required for synthesis of steroid hormones, for olfactory sensory behavior and completion of the second larval molt (a steroid mediated developmental transition) and pupariation. In Drosophila melanogaster (Fruit fly), this protein is NADPH:adrenodoxin oxidoreductase, mitochondrial (dare).